Here is an 817-residue protein sequence, read N- to C-terminus: Disks large homolog 3 (817 aa).

N-acetylmethionine is present on residues methionine 1 and histidine 2. The interval 33–101 (WQVPDPYGPG…GKSTPKLNGS (69 aa)) is disordered. Gly residues predominate over residues 40 to 53 (GPGGGNGASAGYGG). Polar residues predominate over residues 57–69 (QTLPSQAGATPTP). 3 PDZ domains span residues 130–217 (EEIV…VRRR), 226–311 (EVNL…KVAK), and 379–465 (DFTR…VAQY). Serine 139 bears the Phosphoserine mark. Residues 501 to 571 (KRSLYVRALF…PSKKRVEKKE (71 aa)) enclose the SH3 domain. One can recognise a Guanylate kinase-like domain in the interval 627 to 802 (ARPVIILGPM…IYNKIKQIIE (176 aa)). Phosphotyrosine is present on tyrosine 673.

The protein belongs to the MAGUK family. As to quaternary structure, interacts through its PDZ domains with NETO1, GRIN2B and SYNGAP1. Interacts through its guanylate kinase-like domain with DLGAP1, DLGAP2, DLGAP3 and DLGAP4. Interacts with FLTP/C1orf192. Interacts through its PDZ domains with APC. Interacts through its first two PDZ domains with ERBB4. Interacts through its third PDZ domain with NLGN1, and probably with NLGN2 and NLGN3. Interacts with FRMPD4 (via C-terminus). Interacts with LRFN1, LRFN2 and LRFN4. Interacts with DGKI (via PDZ-binding motif).

Functionally, required for learning most likely through its role in synaptic plasticity following NMDA receptor signaling. The sequence is that of Disks large homolog 3 (DLG3) from Homo sapiens (Human).